Consider the following 56-residue polypeptide: Ovomucoid (56 aa).

The Kazal-like domain maps to 6-56 (VDCSEYPKPDCTLEYRPLCGSDNKTYANKCNFCNAVVESNGTLTLSHFGKC). 3 disulfides stabilise this stretch: Cys8/Cys38, Cys16/Cys35, and Cys24/Cys56. Asn45 is a glycosylation site (N-linked (GlcNAc...) asparagine).

The protein localises to the secreted. The chain is Ovomucoid from Callipepla squamata castanogastris (Chestnut bellied scaled quail).